A 197-amino-acid polypeptide reads, in one-letter code: dTTP/UTP pyrophosphatase (197 aa).

Asp70 acts as the Proton acceptor in catalysis.

This sequence belongs to the Maf family. YhdE subfamily. It depends on a divalent metal cation as a cofactor.

It is found in the cytoplasm. The enzyme catalyses dTTP + H2O = dTMP + diphosphate + H(+). The catalysed reaction is UTP + H2O = UMP + diphosphate + H(+). In terms of biological role, nucleoside triphosphate pyrophosphatase that hydrolyzes dTTP and UTP. May have a dual role in cell division arrest and in preventing the incorporation of modified nucleotides into cellular nucleic acids. The chain is dTTP/UTP pyrophosphatase (yceF2) from Escherichia coli O6:K15:H31 (strain 536 / UPEC).